A 524-amino-acid chain; its full sequence is Beta-glucosidase 23 (524 aa).

A signal peptide spans 1–24 (MVLQKLPLIGLLLLLTIVASPANA). Residue glutamine 54 participates in a beta-D-glucoside binding. Asparagine 60 is a glycosylation site (N-linked (GlcNAc...) asparagine). A beta-D-glucoside contacts are provided by residues histidine 157 and 202 to 203 (NE). Glutamate 203 (proton donor) is an active-site residue. Residues cysteine 222 and cysteine 230 are joined by a disulfide bond. A beta-D-glucoside contacts are provided by tyrosine 346 and glutamate 418. Residue glutamate 418 is the Nucleophile of the active site. Asparagine 461 carries an N-linked (GlcNAc...) asparagine glycan. A beta-D-glucoside-binding positions include tryptophan 468, 475 to 476 (EW), and phenylalanine 484. The N-linked (GlcNAc...) asparagine glycan is linked to asparagine 494. The Prevents secretion from ER signature appears at 521 to 524 (KDEL).

The protein belongs to the glycosyl hydrolase 1 family. In terms of assembly, homodimers. Binds to the deubiquitinating enzyme AMSH3. The inactive form interacts with PBP1/JAL30 to form the PYK10 complex, at least composed of PYK10/BGLU23, BGLU21, BGLU22, JAL22, JAL23, PBP1/JAL30, PBP2/JAL31, JAL32, JAL33, JAL34, JAL35, GLL22 and GLL23. In terms of processing, forms interchain disulfide bonds. As to expression, expressed exclusively in roots.

The protein localises to the endoplasmic reticulum lumen. The catalysed reaction is Hydrolysis of terminal, non-reducing beta-D-glucosyl residues with release of beta-D-glucose.. Its activity is regulated as follows. Activated by tissue damage and upon binding to PBP1 or PBP2. In terms of biological role, beta-D-glucosidase active on scopolin &gt; esculin &gt;&gt; 4-MU-glucoside &gt;&gt; DIMBOA-glucoside. No activity with pNP-glucoside, oNP-glucoside and sinigrin as substrates. May possess beta-D-fucosidase activity. Required for the beneficial interaction with the endophytic fungus P.indica. May participate in the control of root colonization by P.indica by repressing defense responses and modulating other responses required for a mutualistic interaction. In Arabidopsis thaliana (Mouse-ear cress), this protein is Beta-glucosidase 23.